The following is a 197-amino-acid chain: Small ribosomal subunit protein uS7 (197 aa).

Belongs to the universal ribosomal protein uS7 family.

The chain is Small ribosomal subunit protein uS7 (RPS5) from Cicer arietinum (Chickpea).